A 431-amino-acid chain; its full sequence is Adenylosuccinate synthetase (431 aa).

Residues Gly-12–Lys-18 and Gly-40–Thr-42 each bind GTP. Asp-13 (proton acceptor) is an active-site residue. Residues Asp-13 and Gly-40 each coordinate Mg(2+). IMP is bound by residues Asp-13–Lys-16, Asn-38–His-41, Thr-129, Arg-143, Gln-224, Thr-239, and Arg-303. His-41 acts as the Proton donor in catalysis. Substrate is bound at residue Val-299–Arg-305. GTP-binding positions include Arg-305, Lys-331–Asp-333, and Gly-413–Gly-415.

The protein belongs to the adenylosuccinate synthetase family. Homodimer. Requires Mg(2+) as cofactor.

The protein localises to the cytoplasm. The catalysed reaction is IMP + L-aspartate + GTP = N(6)-(1,2-dicarboxyethyl)-AMP + GDP + phosphate + 2 H(+). Its pathway is purine metabolism; AMP biosynthesis via de novo pathway; AMP from IMP: step 1/2. Its function is as follows. Plays an important role in the de novo pathway of purine nucleotide biosynthesis. Catalyzes the first committed step in the biosynthesis of AMP from IMP. This Mycolicibacterium vanbaalenii (strain DSM 7251 / JCM 13017 / BCRC 16820 / KCTC 9966 / NRRL B-24157 / PYR-1) (Mycobacterium vanbaalenii) protein is Adenylosuccinate synthetase.